Here is a 108-residue protein sequence, read N- to C-terminus: Protein RnfH (108 aa).

It belongs to the UPF0125 (RnfH) family.

The chain is Protein RnfH from Laribacter hongkongensis (strain HLHK9).